The chain runs to 443 residues: Ribulose bisphosphate carboxylase large chain (443 aa).

Residue K7 is modified to N6,N6,N6-trimethyllysine. Substrate is bound by residues N116 and T166. The active-site Proton acceptor is the K168. Residue K170 participates in substrate binding. Residues K194, D196, and E197 each coordinate Mg(2+). Position 194 is an N6-carboxylysine (K194). Residue H287 is the Proton acceptor of the active site. Substrate contacts are provided by R288, H320, and S372.

Belongs to the RuBisCO large chain family. Type I subfamily. Heterohexadecamer of 8 large chains and 8 small chains; disulfide-linked. The disulfide link is formed within the large subunit homodimers. Requires Mg(2+) as cofactor. The disulfide bond which can form in the large chain dimeric partners within the hexadecamer appears to be associated with oxidative stress and protein turnover.

It localises to the plastid. The protein localises to the chloroplast. It catalyses the reaction 2 (2R)-3-phosphoglycerate + 2 H(+) = D-ribulose 1,5-bisphosphate + CO2 + H2O. It carries out the reaction D-ribulose 1,5-bisphosphate + O2 = 2-phosphoglycolate + (2R)-3-phosphoglycerate + 2 H(+). In terms of biological role, ruBisCO catalyzes two reactions: the carboxylation of D-ribulose 1,5-bisphosphate, the primary event in carbon dioxide fixation, as well as the oxidative fragmentation of the pentose substrate in the photorespiration process. Both reactions occur simultaneously and in competition at the same active site. The chain is Ribulose bisphosphate carboxylase large chain from Abies sachalinensis (Sakhalin fir).